The sequence spans 583 residues: GTP diphosphokinase CRSH1, chloroplastic (583 aa).

The span at 1–13 (MATAATTSAAAIP) shows a compositional bias: low complexity. Positions 1 to 68 (MATAATTSAA…SSSSSTPAEG (68 aa)) are disordered. A chloroplast-targeting transit peptide spans 1–69 (MATAATTSAA…SSSSTPAEGG (69 aa)). Residues 19-39 (RRQHPHPRRPGLRPRRLHRLR) show a composition bias toward basic residues. Residues 40–66 (LPAQAAAAAAASSPSTSSSSSSSSTPA) are compositionally biased toward low complexity. Residues 119–219 (ALARALAIAA…LELALKLDMM (101 aa)) enclose the HD domain. EF-hand domains are found at residues 473-508 (GDSN…LGAG) and 510-542 (KDAK…IELM). The Ca(2+) site is built by D486, N488, D490, R492, E497, D520, N522, D524, S526, and E531.

The protein belongs to the RelA/SpoT family. Expressed in roots and shoots.

It localises to the plastid. The protein localises to the chloroplast. It carries out the reaction GTP + ATP = guanosine 3'-diphosphate 5'-triphosphate + AMP. With respect to regulation, activated by calcium. In terms of biological role, possesses calcium-dependent ppGpp (guanosine 3'-diphosphate 5'-diphosphate) synthetase activity in vitro and is able to functionally complement E.coli relA mutants. May be involved in a rapid plant ppGpp-mediated response to pathogens and other stresses. The protein is GTP diphosphokinase CRSH1, chloroplastic of Oryza sativa subsp. japonica (Rice).